The chain runs to 83 residues: Small ribosomal subunit protein bS16 (83 aa).

It belongs to the bacterial ribosomal protein bS16 family.

This is Small ribosomal subunit protein bS16 from Shewanella frigidimarina (strain NCIMB 400).